A 209-amino-acid polypeptide reads, in one-letter code: Uracil phosphoribosyltransferase (209 aa).

Residues Arg-79, Arg-104, and 131-139 each bind 5-phospho-alpha-D-ribose 1-diphosphate; that span reads DPMLATGGS. Uracil is bound by residues Ile-194 and 199–201; that span reads GDA. Asp-200 is a 5-phospho-alpha-D-ribose 1-diphosphate binding site.

This sequence belongs to the UPRTase family. The cofactor is Mg(2+).

It carries out the reaction UMP + diphosphate = 5-phospho-alpha-D-ribose 1-diphosphate + uracil. It functions in the pathway pyrimidine metabolism; UMP biosynthesis via salvage pathway; UMP from uracil: step 1/1. Its activity is regulated as follows. Allosterically activated by GTP. Its function is as follows. Catalyzes the conversion of uracil and 5-phospho-alpha-D-ribose 1-diphosphate (PRPP) to UMP and diphosphate. This chain is Uracil phosphoribosyltransferase, found in Streptococcus pneumoniae serotype 4 (strain ATCC BAA-334 / TIGR4).